The chain runs to 186 residues: ATP synthase subunit delta (186 aa).

This sequence belongs to the ATPase delta chain family. In terms of assembly, F-type ATPases have 2 components, F(1) - the catalytic core - and F(0) - the membrane proton channel. F(1) has five subunits: alpha(3), beta(3), gamma(1), delta(1), epsilon(1). CF(0) has four main subunits: a(1), b(1), b'(1) and c(10-14). The alpha and beta chains form an alternating ring which encloses part of the gamma chain. F(1) is attached to F(0) by a central stalk formed by the gamma and epsilon chains, while a peripheral stalk is formed by the delta, b and b' chains.

The protein resides in the cell inner membrane. In terms of biological role, f(1)F(0) ATP synthase produces ATP from ADP in the presence of a proton or sodium gradient. F-type ATPases consist of two structural domains, F(1) containing the extramembraneous catalytic core and F(0) containing the membrane proton channel, linked together by a central stalk and a peripheral stalk. During catalysis, ATP synthesis in the catalytic domain of F(1) is coupled via a rotary mechanism of the central stalk subunits to proton translocation. Its function is as follows. This protein is part of the stalk that links CF(0) to CF(1). It either transmits conformational changes from CF(0) to CF(1) or is implicated in proton conduction. This chain is ATP synthase subunit delta, found in Rhodopseudomonas palustris (strain BisB18).